Consider the following 335-residue polypeptide: Tetraacyldisaccharide 4'-kinase (335 aa).

59–66 (TAGGNGKT) contacts ATP.

This sequence belongs to the LpxK family.

It catalyses the reaction a lipid A disaccharide + ATP = a lipid IVA + ADP + H(+). The protein operates within glycolipid biosynthesis; lipid IV(A) biosynthesis; lipid IV(A) from (3R)-3-hydroxytetradecanoyl-[acyl-carrier-protein] and UDP-N-acetyl-alpha-D-glucosamine: step 6/6. Transfers the gamma-phosphate of ATP to the 4'-position of a tetraacyldisaccharide 1-phosphate intermediate (termed DS-1-P) to form tetraacyldisaccharide 1,4'-bis-phosphate (lipid IVA). The protein is Tetraacyldisaccharide 4'-kinase of Vibrio vulnificus (strain YJ016).